A 427-amino-acid chain; its full sequence is Acyl-CoA hydrolase 2 (427 aa).

15 to 83 (LLQKLPSSSL…FLLKQYDYFG (69 aa)) contributes to the a nucleoside 3',5'-cyclic phosphate binding site. Active-site charge relay system residues include D337, S359, and Q409. Residues 425–427 (SKL) carry the Microbody targeting signal motif.

The protein belongs to the C/M/P thioester hydrolase family. Homotetramer. Mostly expressed in leaves and flowers, and, to a lower extent, in seedlings and siliques.

The protein resides in the peroxisome matrix. It catalyses the reaction a fatty acyl-CoA + H2O = a fatty acid + CoA + H(+). It carries out the reaction dodecanoyl-CoA + H2O = dodecanoate + CoA + H(+). The catalysed reaction is tetradecanoyl-CoA + H2O = tetradecanoate + CoA + H(+). The enzyme catalyses octadecanoyl-CoA + H2O = octadecanoate + CoA + H(+). It catalyses the reaction (9Z)-hexadecenoyl-CoA + H2O = (9Z)-hexadecenoate + CoA + H(+). It carries out the reaction (5Z,8Z,11Z,14Z)-eicosatetraenoyl-CoA + H2O = (5Z,8Z,11Z,14Z)-eicosatetraenoate + CoA + H(+). The catalysed reaction is hexadecanoyl-CoA + H2O = hexadecanoate + CoA + H(+). The enzyme catalyses (9Z)-octadecenoyl-CoA + H2O = (9Z)-octadecenoate + CoA + H(+). It catalyses the reaction (9Z,12Z)-octadecadienoyl-CoA + H2O = (9Z,12Z)-octadecadienoate + CoA + H(+). It participates in lipid metabolism; fatty acid metabolism. Its activity is regulated as follows. Insensitive to feedback inhibition by free coenzyme A (CoASH). Functionally, catalyzes the hydrolysis of acyl-CoAs into free fatty acids and coenzyme A (CoASH), regulating their respective intracellular levels. Active with both medium chain and long chain acyl-CoAs (e.g. 12:0-CoA, 14:0-CoA, 16:0-CoA, 18:0-CoA, 16:1-CoA, 18:1-CoA, 18:2-CoA and 20:4-CoA) as substrates, palmitoleoyl-CoA (16:1-CoA) being the favorite substrate. In Arabidopsis thaliana (Mouse-ear cress), this protein is Acyl-CoA hydrolase 2.